We begin with the raw amino-acid sequence, 216 residues long: Redox-sensing transcriptional repressor Rex (216 aa).

Residues 20–59 constitute a DNA-binding region (H-T-H motif); sequence QYYRLFKSLVEENVTRTNSQLISEKIGVDAATIRRDFSLF. An NAD(+)-binding site is contributed by 94-99; it reads GVGNLG.

This sequence belongs to the transcriptional regulatory Rex family. In terms of assembly, homodimer.

The protein localises to the cytoplasm. Modulates transcription in response to changes in cellular NADH/NAD(+) redox state. This Lactococcus lactis subsp. lactis (strain IL1403) (Streptococcus lactis) protein is Redox-sensing transcriptional repressor Rex.